We begin with the raw amino-acid sequence, 160 residues long: Transcriptional repressor NrdR (160 aa).

The segment at 3-34 (CPACNYNGTKVLDSRPVQDFGSIRRRRECESC) is a zinc-finger region. The ATP-cone domain maps to 49–139 (LIIVKKDGTR…VYKQFKDINV (91 aa)).

The protein belongs to the NrdR family. It depends on Zn(2+) as a cofactor.

Functionally, negatively regulates transcription of bacterial ribonucleotide reductase nrd genes and operons by binding to NrdR-boxes. This Exiguobacterium sibiricum (strain DSM 17290 / CCUG 55495 / CIP 109462 / JCM 13490 / 255-15) protein is Transcriptional repressor NrdR.